We begin with the raw amino-acid sequence, 445 residues long: N-succinylarginine dihydrolase (445 aa).

Substrate-binding positions include 19–28, N110, and 137–138; these read AGLSFGNVAS and HR. E174 is a catalytic residue. Position 214 (R214) interacts with substrate. H250 is an active-site residue. 2 residues coordinate substrate: D252 and N363. C369 (nucleophile) is an active-site residue.

Belongs to the succinylarginine dihydrolase family. Homodimer.

The catalysed reaction is N(2)-succinyl-L-arginine + 2 H2O + 2 H(+) = N(2)-succinyl-L-ornithine + 2 NH4(+) + CO2. It functions in the pathway amino-acid degradation; L-arginine degradation via AST pathway; L-glutamate and succinate from L-arginine: step 2/5. Its function is as follows. Catalyzes the hydrolysis of N(2)-succinylarginine into N(2)-succinylornithine, ammonia and CO(2). This is N-succinylarginine dihydrolase from Shewanella pealeana (strain ATCC 700345 / ANG-SQ1).